The following is a 331-amino-acid chain: Inactive serine/threonine-protein kinase BKN1 (331 aa).

Glycine 2 carries N-myristoyl glycine lipidation. Residue cysteine 4 is the site of S-palmitoyl cysteine attachment. In terms of domain architecture, Protein kinase spans 58 to 328 (DYSVRKFYKG…VLDGLNHIAE (271 aa)).

Belongs to the protein kinase superfamily. Ser/Thr protein kinase family. As to expression, restricted to stigma in flowers.

It is found in the cell membrane. The protein localises to the nucleus. In terms of biological role, collaboratively with BKN2/SZE2, involved in compatible pollen-stigma interactions. This chain is Inactive serine/threonine-protein kinase BKN1, found in Arabidopsis thaliana (Mouse-ear cress).